Reading from the N-terminus, the 286-residue chain is Probable ketoamine kinase EAE_16955 (286 aa).

92-94 (EYL) serves as a coordination point for ATP. D194 functions as the Proton acceptor in the catalytic mechanism.

Belongs to the fructosamine kinase family.

Ketoamine kinase that phosphorylates ketoamines on the third carbon of the sugar moiety to generate ketoamine 3-phosphate. The protein is Probable ketoamine kinase EAE_16955 of Klebsiella aerogenes (strain ATCC 13048 / DSM 30053 / CCUG 1429 / JCM 1235 / KCTC 2190 / NBRC 13534 / NCIMB 10102 / NCTC 10006 / CDC 819-56) (Enterobacter aerogenes).